A 218-amino-acid chain; its full sequence is Uracil-DNA glycosylase (218 aa).

The active-site Proton acceptor is the Asp-68.

It belongs to the uracil-DNA glycosylase (UDG) superfamily. UNG family. In terms of assembly, homodimer. Interacts with protein OPG148. Component of the Uracil-DNA glycosylase(UDG)-OPG148-polymerase complex; OPG148 and UDG form a heterodimeric processivity factor that associates with OPG71 to form the processive polymerase holoenzyme.

The catalysed reaction is Hydrolyzes single-stranded DNA or mismatched double-stranded DNA and polynucleotides, releasing free uracil.. Functionally, plays an essential role in viral replication as a component of the DNA polymerase processivity factor. Excises uracil residues from the DNA which can arise as a result of misincorporation of dUMP residues by DNA polymerase or due to deamination of cytosine. This is Uracil-DNA glycosylase (OPG116) from Bos taurus (Bovine).